Reading from the N-terminus, the 159-residue chain is Vesicle transport protein SFT2A (159 aa).

At 1–36 the chain is on the cytoplasmic side; that stretch reads MEKLRRVLSGQDDEEQGLTAQVLDASSLSFNTRLKW. Position 9 is a phosphoserine (serine 9). The helical transmembrane segment at 37 to 57 threads the bilayer; sequence FVICFVAGIFFSFLGTGLLWL. Residues 58–62 are Lumenal-facing; sequence PNGMK. Residues 63–83 form a helical membrane-spanning segment; that stretch reads LFAVFYTLGNLAALASTCFLM. Residues 84–97 are Cytoplasmic-facing; that stretch reads GPVKQLKKMFETTR. Residues 98-118 traverse the membrane as a helical segment; it reads LLATIIMLLCLVFTLCAALWW. The Lumenal portion of the chain corresponds to 119 to 122; the sequence is RKKG. Residues 123–143 traverse the membrane as a helical segment; sequence LALLFCILQFLSMTWYSLSYI. Over 144–159 the chain is Cytoplasmic; the sequence is PYARDAVLKCCSSLLG.

The protein belongs to the SFT2 family.

It is found in the membrane. In terms of biological role, may be involved in fusion of retrograde transport vesicles derived from an endocytic compartment with the Golgi complex. This is Vesicle transport protein SFT2A from Mus musculus (Mouse).